The sequence spans 755 residues: Kelch-like protein 5 (755 aa).

Residues 152–184 form a disordered region; that stretch reads LDRPEVDDGTSEEENESDSSSCRTSNSSQTLSS. Acidic residues predominate over residues 158–168; the sequence is DDGTSEEENES. The segment covering 169–184 has biased composition (low complexity); the sequence is DSSSCRTSNSSQTLSS. One can recognise a BTB domain in the interval 220 to 287; that stretch reads CDVILVAGDR…AYTGRLELKE (68 aa). 6 Kelch repeats span residues 468–514, 515–561, 563–608, 609–655, 657–708, and 709–754; these read TLFA…VLDD, KLYV…VLEG, MYAV…VLSG, KLYA…TWNG, LYAI…LLGD, and KLYA…VTVK.

In terms of tissue distribution, expressed in adrenal gland, ovary and thyroid gland and less abundantly in lymph node, prostate, spinal cord, testis and trachea.

The protein resides in the cytoplasm. The protein localises to the cytoskeleton. The protein is Kelch-like protein 5 (KLHL5) of Homo sapiens (Human).